The chain runs to 166 residues: MTEKIGLFTGTFDPLTNGHLDIIKRASQHFDQLYVGIFKNDQKNPLFPTDKRVEMLEEALTNLSVNHKVKVIKHERDLTVNIAKKLGVTAMVRSLRNSQDLEYEKNMFYFNLEMTGIETLFFLAKPELEPLNSTRIRELHAFGQDVSAWVPENVSRELRKLDEQKK.

Threonine 11 is a substrate binding site. ATP contacts are provided by residues 11-12 (TF) and histidine 19. Substrate is bound by residues lysine 43, threonine 79, and arginine 93. ATP contacts are provided by residues glutamate 104 and 128-134 (LEPLNST).

Belongs to the bacterial CoaD family. As to quaternary structure, homohexamer. The cofactor is Mg(2+).

Its subcellular location is the cytoplasm. It catalyses the reaction (R)-4'-phosphopantetheine + ATP + H(+) = 3'-dephospho-CoA + diphosphate. It participates in cofactor biosynthesis; coenzyme A biosynthesis; CoA from (R)-pantothenate: step 4/5. Functionally, reversibly transfers an adenylyl group from ATP to 4'-phosphopantetheine, yielding dephospho-CoA (dPCoA) and pyrophosphate. The sequence is that of Phosphopantetheine adenylyltransferase from Lactococcus lactis subsp. cremoris (strain MG1363).